A 290-amino-acid chain; its full sequence is MVSFNSLLVAVSAATCALAFPFEFHNGTHVFPRQSTPAGTGTNNGYFYSFWTDGGGSVTYNNGPAGEYSVTWSNADNFVAGKGWNPGSAQAISFTANYQPNGNSYLSVYGWSTNPLVEYYILEDFGTYNPAVSLTHKGTLTSDGATYDVYEGTRVNEPSIQGTATFNQYWSIRSSKRSSGTVTTANHFAAWKQLGLPLGTFNYQIVATEGYQSSGSSTVTVNPAGGVTSPIAPTGPSSVSTTPSGPSSSPSPVGTCSALYGQCGGQGWTGPTCCSSGTCKFSNNWYSQCL.

Residues 1 to 19 form the signal peptide; it reads MVSFNSLLVAVSAATCALA. Residue asparagine 26 is glycosylated (N-linked (GlcNAc...) asparagine). The region spanning 34–222 is the GH11 domain; that stretch reads QSTPAGTGTN…SSGSSTVTVN (189 aa). The Nucleophile role is filled by glutamate 118. The active-site Proton donor is the glutamate 209. The segment at 223–248 is disordered; it reads PAGGVTSPIAPTGPSSVSTTPSGPSS. A compositionally biased stretch (low complexity) spans 234–248; that stretch reads TGPSSVSTTPSGPSS. One can recognise a CBM1 domain in the interval 255 to 290; sequence TCSALYGQCGGQGWTGPTCCSSGTCKFSNNWYSQCL.

Belongs to the glycosyl hydrolase 11 (cellulase G) family.

The protein localises to the secreted. It catalyses the reaction Endohydrolysis of (1-&gt;4)-beta-D-xylosidic linkages in xylans.. It functions in the pathway glycan degradation; xylan degradation. In terms of biological role, endo-1,4-beta-xylanase involved in the hydrolysis of xylan, a major structural heterogeneous polysaccharide found in plant biomass representing the second most abundant polysaccharide in the biosphere, after cellulose. The protein is Endo-1,4-beta-xylanase B (xynB) of Phanerodontia chrysosporium (White-rot fungus).